We begin with the raw amino-acid sequence, 76 residues long: Omega-conotoxin MoVIA (76 aa).

The first 22 residues, 1–22 (MKLTCVVIVAVLFLTACQLITA), serve as a signal peptide directing secretion. Positions 23 to 45 (DDSRSTQRHRALRSTTKLSMSTR) are excised as a propeptide. 3 disulfides stabilise this stretch: Cys46-Cys61, Cys53-Cys64, and Cys60-Cys71. Hydroxyproline is present on residues Pro49 and Pro55.

It belongs to the conotoxin O1 superfamily. In terms of tissue distribution, expressed by the venom duct.

It localises to the secreted. Functionally, omega-conotoxins act at presynaptic membranes, they bind and block voltage-gated calcium channels (Cav). This toxin potently blocks mammalian N-type calcium channels (Cav2.2/CACNA1B) (IC(50)=330 nM on human channels). It is 9-fold more potent in displacing radiolabeled omega-conotoxin GVIA from fish brain membranes than from human SH-SY5Y cells. Omega-conotoxins act at presynaptic membranes, they bind and block voltage-gated calcium channels (Cav). This toxin potently blocks mammalian N-type calcium channels (Cav2.2/CACNA1B) (IC(50)=600 nM on human channels). It is 60-fold more potent in displacing radiolabeled omega-conotoxin GVIA from fish brain membranes than from human SH-SY5Y cells. In vivo, when tested on rat neuropathic pain model, this toxin shows an analgesic activity. This Conus moncuri (Sea snail) protein is Omega-conotoxin MoVIA.